A 249-amino-acid polypeptide reads, in one-letter code: tRNA (guanine-N(1)-)-methyltransferase (249 aa).

Residues G112 and 132–137 (LGDFVL) each bind S-adenosyl-L-methionine.

The protein belongs to the RNA methyltransferase TrmD family. In terms of assembly, homodimer.

Its subcellular location is the cytoplasm. The enzyme catalyses guanosine(37) in tRNA + S-adenosyl-L-methionine = N(1)-methylguanosine(37) in tRNA + S-adenosyl-L-homocysteine + H(+). In terms of biological role, specifically methylates guanosine-37 in various tRNAs. In Geobacter sp. (strain M21), this protein is tRNA (guanine-N(1)-)-methyltransferase.